Here is a 209-residue protein sequence, read N- to C-terminus: Thymidine kinase (209 aa).

ATP contacts are provided by residues 25-32 (GCMFAGKT) and 103-106 (DEVQ). Glu104 functions as the Proton acceptor in the catalytic mechanism. 4 residues coordinate Zn(2+): Cys160, Cys163, Cys198, and Cys201.

This sequence belongs to the thymidine kinase family. As to quaternary structure, homotetramer.

The protein resides in the cytoplasm. The enzyme catalyses thymidine + ATP = dTMP + ADP + H(+). The sequence is that of Thymidine kinase from Mycoplasma capricolum subsp. capricolum (strain California kid / ATCC 27343 / NCTC 10154).